The following is a 517-amino-acid chain: Light-independent protochlorophyllide reductase subunit B (517 aa).

Asp-36 lines the [4Fe-4S] cluster pocket. The active-site Proton donor is Asp-285. Gly-420–Leu-421 is a binding site for substrate.

Belongs to the ChlB/BchB/BchZ family. Protochlorophyllide reductase is composed of three subunits; BchL, BchN and BchB. Forms a heterotetramer of two BchB and two BchN subunits. [4Fe-4S] cluster is required as a cofactor.

The catalysed reaction is chlorophyllide a + oxidized 2[4Fe-4S]-[ferredoxin] + 2 ADP + 2 phosphate = protochlorophyllide a + reduced 2[4Fe-4S]-[ferredoxin] + 2 ATP + 2 H2O. The protein operates within porphyrin-containing compound metabolism; bacteriochlorophyll biosynthesis (light-independent). Component of the dark-operative protochlorophyllide reductase (DPOR) that uses Mg-ATP and reduced ferredoxin to reduce ring D of protochlorophyllide (Pchlide) to form chlorophyllide a (Chlide). This reaction is light-independent. The NB-protein (BchN-BchB) is the catalytic component of the complex. The polypeptide is Light-independent protochlorophyllide reductase subunit B (Bradyrhizobium sp. (strain BTAi1 / ATCC BAA-1182)).